The sequence spans 608 residues: Lysophospholipase 2 (608 aa).

The N-terminal stretch at 1–17 (MLVWQSILLFLVGCVLS) is a signal peptide. Positions 30–564 (QCPEGKLTRS…ENYCWDGTIY (535 aa)) constitute a PLA2c domain. N-linked (GlcNAc...) asparagine glycans are attached at residues N259, N365, N450, N464, N491, and N572.

Belongs to the lysophospholipase family.

It is found in the secreted. The enzyme catalyses a 1-acyl-sn-glycero-3-phosphocholine + H2O = sn-glycerol 3-phosphocholine + a fatty acid + H(+). Catalyzes the release of fatty acids from lysophospholipids. Phospholipase B may well contribute to pathogenicity by abetting the fungus in damaging and traversing host cell membranes, processes which likely increase the rapidity of disseminated infection. The protein is Lysophospholipase 2 (PLB2) of Candida albicans (Yeast).